Reading from the N-terminus, the 98-residue chain is Secreted LysM effector Mgx1LysM (98 aa).

A signal peptide spans methionine 1 to alanine 18. 2 disulfides stabilise this stretch: cysteine 31/cysteine 89 and cysteine 62/cysteine 97. The region spanning isoleucine 37–isoleucine 85 is the LysM domain. 4 residues coordinate chitin: glycine 44, threonine 48, asparagine 75, and isoleucine 77.

This sequence belongs to the secreted LysM effector family. In terms of assembly, forms homodimers in a chitin-independent manner through interactions at the N-termini of Mgx1LysM monomers. Homodimers are further polymerized in a chitin-dependent manner.

The protein resides in the secreted. Its subcellular location is the cell wall. In terms of biological role, secreted effector that enables the plant pathogenic fungus to manipulate host defenses for successful infection. Binds chitin and suppresses the chitin-induced reactive oxygen species (ROS) burst. Chitin-induced polymerization of homodimers forms a contiguous Mg1LysM highly oligomeric super-complexe that is anchored to the chitin in the fungal cell wall to prevent hydrolysis by host chitinases. The polypeptide is Secreted LysM effector Mgx1LysM (Zymoseptoria tritici (strain ST99CH_3D7)).